Consider the following 462-residue polypeptide: MRLLDSVTKEKIKLDKKDISIYLCGPTVYDDAHLGHARSSVCFDLLRRVLLAQGNRVKFARNYTDIDDKILKKMTQSGQTLEEITEFYIKSYEEDMRALNVLDPDFKPRATHYITAMLDLIKKLAKDGFVYTLEDGIYFDTSKDEKYLSLSNRNLEENISRLSNEVQKRNESDFVLWKFDENFYENEFGKGRPGWHTECVAMIDSIFENTLDIHAGGIDLLFPHHENEAAQCRCGCKRKLANIWLHNGFVKIDGEKMSKSLNNSFFIKDALKEFMGEALRFYLLSSHYRSHFNYSLSDLENAKKRLDKFYRLKKRLDLGEISDFDVLNDIEIKSEIAKQILEILNDDLNVSKALALLDDFISSANLELDKESKNKILKQNIKEALSELAKIFGFGFMDTTLYFQWGVSKEEREEIEKLILERTEAKKNKDFNTADAIREQLNSKKITLLDTPNGTIWEKINA.

Position 24 (Cys24) interacts with Zn(2+). The 'HIGH' region signature appears at 26-36; the sequence is PTVYDDAHLGH. Zn(2+) is bound by residues Cys199, His224, and Glu228. Residues 256-260 carry the 'KMSKS' region motif; that stretch reads KMSKS. Position 259 (Lys259) interacts with ATP.

This sequence belongs to the class-I aminoacyl-tRNA synthetase family. Monomer. The cofactor is Zn(2+).

Its subcellular location is the cytoplasm. The enzyme catalyses tRNA(Cys) + L-cysteine + ATP = L-cysteinyl-tRNA(Cys) + AMP + diphosphate. This Campylobacter jejuni subsp. jejuni serotype O:23/36 (strain 81-176) protein is Cysteine--tRNA ligase.